Consider the following 137-residue polypeptide: UPF0275 protein PM0489 (137 aa).

It belongs to the UPF0275 family.

In Pasteurella multocida (strain Pm70), this protein is UPF0275 protein PM0489.